Reading from the N-terminus, the 319-residue chain is uncharacterized protein (319 aa).

Residues 21–70 (ETETLKNSTDEVQTSSSFSSSGGRQSSPLTSGSKLEREKQTPSLEQGDTQ) form a disordered region. Residues 25 to 34 (LKNSTDEVQT) are compositionally biased toward polar residues. A compositionally biased stretch (low complexity) spans 35-51 (SSSFSSSGGRQSSPLTS). Residues 61-70 (TPSLEQGDTQ) show a composition bias toward polar residues.

This is an uncharacterized protein from Homo sapiens (Human).